We begin with the raw amino-acid sequence, 866 residues long: Leucine--tRNA ligase (866 aa).

The 'HIGH' region signature appears at Pro-42–His-52. Positions Lys-630 to Ser-634 match the 'KMSKS' region motif. Lys-633 contributes to the ATP binding site.

This sequence belongs to the class-I aminoacyl-tRNA synthetase family.

The protein localises to the cytoplasm. It catalyses the reaction tRNA(Leu) + L-leucine + ATP = L-leucyl-tRNA(Leu) + AMP + diphosphate. This chain is Leucine--tRNA ligase, found in Laribacter hongkongensis (strain HLHK9).